The following is an 87-amino-acid chain: Large ribosomal subunit protein bL27 (87 aa).

The interval 1–21 (MAHKKAGGSSRNGRDSESKRL) is disordered.

The protein belongs to the bacterial ribosomal protein bL27 family.

This Burkholderia mallei (strain NCTC 10247) protein is Large ribosomal subunit protein bL27.